The following is an 84-amino-acid chain: Large ribosomal subunit protein bL27 (84 aa).

Residues 1–20 form a disordered region; sequence MAHKKGGGSTKNGRDSNPKY.

It belongs to the bacterial ribosomal protein bL27 family.

The chain is Large ribosomal subunit protein bL27 (rpmA) from Prosthecochloris vibrioformis (Chlorobium vibrioforme).